A 474-amino-acid polypeptide reads, in one-letter code: Trehalose-6-phosphate synthase (474 aa).

A D-glucose 6-phosphate-binding site is contributed by Arg-10. 22 to 23 (GG) contacts UDP-alpha-D-glucose. D-glucose 6-phosphate contacts are provided by Tyr-77 and Asp-131. The UDP-alpha-D-glucose site is built by Arg-263 and Lys-268. Arg-301 is a D-glucose 6-phosphate binding site. UDP-alpha-D-glucose contacts are provided by residues Phe-340 and 366–370 (LVAKE).

This sequence belongs to the glycosyltransferase 20 family. As to quaternary structure, homotetramer.

The catalysed reaction is D-glucose 6-phosphate + UDP-alpha-D-glucose = alpha,alpha-trehalose 6-phosphate + UDP + H(+). It functions in the pathway glycan biosynthesis; trehalose biosynthesis. Functionally, probably involved in the osmoprotection via the biosynthesis of trehalose. Catalyzes the transfer of glucose from UDP-alpha-D-glucose (UDP-Glc) to D-glucose 6-phosphate (Glc-6-P) to form trehalose-6-phosphate. Acts with retention of the anomeric configuration of the UDP-sugar donor. The polypeptide is Trehalose-6-phosphate synthase (Enterobacter sp. (strain 638)).